Here is a 194-residue protein sequence, read N- to C-terminus: dCTP deaminase (194 aa).

DCTP is bound by residues 110–115 (RSSLAR), D128, 136–138 (VLE), Y171, K178, and Q182. Catalysis depends on E138, which acts as the Proton donor/acceptor. Positions 175 to 194 (KDAKYKNQQSAVSSRINQDD) are disordered. Over residues 180–194 (KNQQSAVSSRINQDD) the composition is skewed to polar residues.

This sequence belongs to the dCTP deaminase family. As to quaternary structure, homotrimer.

It catalyses the reaction dCTP + H2O + H(+) = dUTP + NH4(+). It functions in the pathway pyrimidine metabolism; dUMP biosynthesis; dUMP from dCTP (dUTP route): step 1/2. Its function is as follows. Catalyzes the deamination of dCTP to dUTP. The protein is dCTP deaminase of Actinobacillus pleuropneumoniae serotype 5b (strain L20).